A 492-amino-acid polypeptide reads, in one-letter code: Spore germination protein XA (492 aa).

A run of 7 helical transmembrane segments spans residues 246–266, 285–305, 325–345, 353–373, 377–397, 413–433, and 442–462; these read FILL…FPFF, LLSL…VALV, EGIP…FELL, PAAF…QAAI, FVSP…FTLV, FLMS…LIVI, and GLPF…PSTF.

Belongs to the GerABKA family.

The protein localises to the cell membrane. Its function is as follows. May allow B.anthracis to germinate within phagocytic cells and therefore involved in virulence. The protein is Spore germination protein XA (gerXA) of Bacillus anthracis.